The chain runs to 96 residues: Phosphoribosyl-ATP pyrophosphatase (96 aa).

The protein belongs to the PRA-PH family.

Its subcellular location is the cytoplasm. It carries out the reaction 1-(5-phospho-beta-D-ribosyl)-ATP + H2O = 1-(5-phospho-beta-D-ribosyl)-5'-AMP + diphosphate + H(+). Its pathway is amino-acid biosynthesis; L-histidine biosynthesis; L-histidine from 5-phospho-alpha-D-ribose 1-diphosphate: step 2/9. The sequence is that of Phosphoribosyl-ATP pyrophosphatase from Methanococcus maripaludis (strain DSM 14266 / JCM 13030 / NBRC 101832 / S2 / LL).